A 123-amino-acid chain; its full sequence is Small ribosomal subunit protein uS8 (123 aa).

This sequence belongs to the universal ribosomal protein uS8 family. As to quaternary structure, part of the 30S ribosomal subunit. Contacts proteins S5 and S12.

Functionally, one of the primary rRNA binding proteins, it binds directly to 16S rRNA central domain where it helps coordinate assembly of the platform of the 30S subunit. This chain is Small ribosomal subunit protein uS8 (rpsH), found in Carsonella ruddii (strain PV).